A 140-amino-acid polypeptide reads, in one-letter code: MDTKKFRGSRTCGGGTHKNRRGAGNRGGRGKAGGCKHHFVRAMMRGYSYGKHGFKRPDEVSRDVSIVNVGELDELASYLVEEGLAEVKDGAYHINLENLGIEKVLGSGRVTKNLVVTSEEFSASAREKIENAGGSCIDAE.

The interval 1–32 (MDTKKFRGSRTCGGGTHKNRRGAGNRGGRGKA) is disordered.

This sequence belongs to the universal ribosomal protein uL15 family. As to quaternary structure, part of the 50S ribosomal subunit.

Its function is as follows. Binds to the 23S rRNA. In Methanosarcina acetivorans (strain ATCC 35395 / DSM 2834 / JCM 12185 / C2A), this protein is Large ribosomal subunit protein uL15.